The chain runs to 86 residues: Protein U17 (86 aa).

This is Protein U17 (U17/U16) from Homo sapiens (Human).